We begin with the raw amino-acid sequence, 76 residues long: Sec-independent protein translocase protein TatA (76 aa).

Residues 1–21 traverse the membrane as a helical segment; sequence MGSFSIWHWLIVLVIVALVFG. 2 stretches are compositionally biased toward basic and acidic residues: residues 39–50 and 64–76; these read FKDGMKGEDDKP and GTVD…KSNS. A disordered region spans residues 39 to 76; that stretch reads FKDGMKGEDDKPAAQNAAPSQVADKGTVDVEVKEKSNS.

The protein belongs to the TatA/E family. In terms of assembly, the Tat system comprises two distinct complexes: a TatABC complex, containing multiple copies of TatA, TatB and TatC subunits, and a separate TatA complex, containing only TatA subunits. Substrates initially bind to the TatABC complex, which probably triggers association of the separate TatA complex to form the active translocon.

The protein localises to the cell inner membrane. Functionally, part of the twin-arginine translocation (Tat) system that transports large folded proteins containing a characteristic twin-arginine motif in their signal peptide across membranes. TatA could form the protein-conducting channel of the Tat system. The protein is Sec-independent protein translocase protein TatA of Herminiimonas arsenicoxydans.